The following is a 162-amino-acid chain: Protein-export protein SecB (162 aa).

This sequence belongs to the SecB family. As to quaternary structure, homotetramer, a dimer of dimers. One homotetramer interacts with 1 SecA dimer.

It localises to the cytoplasm. In terms of biological role, one of the proteins required for the normal export of preproteins out of the cell cytoplasm. It is a molecular chaperone that binds to a subset of precursor proteins, maintaining them in a translocation-competent state. It also specifically binds to its receptor SecA. The sequence is that of Protein-export protein SecB from Hamiltonella defensa subsp. Acyrthosiphon pisum (strain 5AT).